The following is a 303-amino-acid chain: Protoheme IX farnesyltransferase 1 (303 aa).

A run of 9 helical transmembrane segments spans residues 18–38 (PGIIMGNLISVAGGFLLAAQG), 42–62 (LTLMFATMIGLSLVVASGCAV), 91–111 (AVLSFGIGLGIIGFAMLAIFT), 114–134 (LAVLFAAIGYVVYVGVYSLYM), 139–159 (VYGTLVGSFSGAVPPVVGYCA), 169–189 (VILLLMFSLWQMPHSYAIAIF), 213–233 (LHIVLYIAVFAVVSALLPLAG), 235–255 (TGIAFMAVTFATSLWWLAMAL), and 274–294 (FSIITITALSVTMALDFQVVA).

The protein belongs to the UbiA prenyltransferase family. Protoheme IX farnesyltransferase subfamily.

It is found in the cell inner membrane. It carries out the reaction heme b + (2E,6E)-farnesyl diphosphate + H2O = Fe(II)-heme o + diphosphate. The protein operates within porphyrin-containing compound metabolism; heme O biosynthesis; heme O from protoheme: step 1/1. In terms of biological role, converts heme B (protoheme IX) to heme O by substitution of the vinyl group on carbon 2 of heme B porphyrin ring with a hydroxyethyl farnesyl side group. This Shewanella frigidimarina (strain NCIMB 400) protein is Protoheme IX farnesyltransferase 1.